The chain runs to 529 residues: uncharacterized protein (529 aa).

ABC transporter domains follow at residues 6–257 (LAIE…QKLL) and 287–526 (IRKG…RQLL). Residues 42–49 (GESGSGKS) and 319–326 (GESGSGKS) contribute to the ATP site.

This sequence belongs to the ABC transporter superfamily.

This is an uncharacterized protein from Escherichia coli (strain K12).